A 374-amino-acid chain; its full sequence is Alpha-galactosylglucosyldiacylglycerol synthase (374 aa).

This sequence belongs to the glycosyltransferase group 1 family. Glycosyltransferase 4 subfamily. The cofactor is Mg(2+).

The protein resides in the cell membrane. It carries out the reaction a 1,2-diacyl-3-O-(alpha-D-glucopyranosyl)-sn-glycerol + UDP-alpha-D-galactose = a 1,2-diacyl-3-O-[alpha-D-galactopyranosyl-(1-&gt;2)-alpha-D-glucopyranosyl]-sn-glycerol + UDP + H(+). With respect to regulation, activated by the negatively charged lipid phosphatidylglycerol (PG). In terms of biological role, galactosyltransferase involved in the biosynthesis of the bilayer-forming membrane lipid alpha-galactosyl-glucosyldiacylglycerol which is involved in maintaining constant nonbilayer/bilayer conditions (curvature packing stress). Also involved in the beta-lactam resistance. Catalyzes the transfer of a galactosyl residue from UDP-Gal to alpha-glucosyl-DAG (1,2-diacyl-3-O-(alpha-D-glucopyranosyl)-sn-glycerol) acceptor to form the corresponding galactosyl-glycosyl-DAG product (3-O-alpha-(D-galactopyranosyl-alpha-(1-&gt;2)-D-glucopyranosyl)-1,2-diacyl-sn-glycerol). It can only use UDP-Gal as sugar donor and alpha-glucosyl-DAG is the preferred sugar acceptor. The protein is Alpha-galactosylglucosyldiacylglycerol synthase (cpoA) of Streptococcus pneumoniae (strain ATCC BAA-255 / R6).